The sequence spans 303 residues: Protoheme IX farnesyltransferase (303 aa).

The next 6 membrane-spanning stretches (helical) occupy residues 25-45 (MGLVQGNLIPAFAGAWLAIVM), 54-74 (IPQILLMLVGSTLIMGGACAL), 118-138 (CLFLLNIPSGVLGLIGIVGYV), 166-186 (IGWVAIDGSLSLAAVALFLVV), 230-250 (LVLLLPLPFLLSNLGVTFVVI), and 280-300 (FVYSLNYLVVFFALVVVVSLI).

It belongs to the UbiA prenyltransferase family. Protoheme IX farnesyltransferase subfamily. In terms of assembly, interacts with CtaA.

It is found in the cell membrane. The enzyme catalyses heme b + (2E,6E)-farnesyl diphosphate + H2O = Fe(II)-heme o + diphosphate. Its pathway is porphyrin-containing compound metabolism; heme O biosynthesis; heme O from protoheme: step 1/1. In terms of biological role, converts heme B (protoheme IX) to heme O by substitution of the vinyl group on carbon 2 of heme B porphyrin ring with a hydroxyethyl farnesyl side group. This Staphylococcus epidermidis (strain ATCC 35984 / DSM 28319 / BCRC 17069 / CCUG 31568 / BM 3577 / RP62A) protein is Protoheme IX farnesyltransferase.